The sequence spans 174 residues: Protein TM_1551 (174 aa).

One can recognise an AMMECR1 domain in the interval 2–174 (IGEHPYVKWA…IYRFTVERYK (173 aa)).

In Thermotoga maritima (strain ATCC 43589 / DSM 3109 / JCM 10099 / NBRC 100826 / MSB8), this protein is Protein TM_1551.